The chain runs to 362 residues: Probable cysteine protease RDL2 (362 aa).

The first 28 residues, 1–28 (MAATPIRVIVSALVILSVLLLSSSLGVA), serve as a signal peptide directing secretion. The propeptide at 29–129 (TETEIERNET…ERYLYKEGDV (101 aa)) is activation peptide. N-linked (GlcNAc...) asparagine glycosylation is present at Asn-36. 2 disulfide bridges follow: Cys-151/Cys-194 and Cys-185/Cys-228. Cys-154 is a catalytic residue. An N-linked (GlcNAc...) asparagine glycan is attached at Asn-234. Cys-287 and Cys-338 are oxidised to a cystine. Residues His-293 and Asn-313 contribute to the active site.

This sequence belongs to the peptidase C1 family.

Functionally, probable thiol protease. This Arabidopsis thaliana (Mouse-ear cress) protein is Probable cysteine protease RDL2.